Here is a 211-residue protein sequence, read N- to C-terminus: Octanoyltransferase (211 aa).

The region spanning 32–207 is the BPL/LPL catalytic domain; sequence PCTYDEIWFV…ELSKFLEIFI (176 aa). Residues 71–78, 138–140, and 151–153 each bind substrate; these read RGGQITYH, SLG, and GLA. Residue C169 is the Acyl-thioester intermediate of the active site.

It belongs to the LipB family.

It is found in the cytoplasm. It carries out the reaction octanoyl-[ACP] + L-lysyl-[protein] = N(6)-octanoyl-L-lysyl-[protein] + holo-[ACP] + H(+). It functions in the pathway protein modification; protein lipoylation via endogenous pathway; protein N(6)-(lipoyl)lysine from octanoyl-[acyl-carrier-protein]: step 1/2. Functionally, catalyzes the transfer of endogenously produced octanoic acid from octanoyl-acyl-carrier-protein onto the lipoyl domains of lipoate-dependent enzymes. Lipoyl-ACP can also act as a substrate although octanoyl-ACP is likely to be the physiological substrate. The polypeptide is Octanoyltransferase (Buchnera aphidicola subsp. Acyrthosiphon pisum (strain APS) (Acyrthosiphon pisum symbiotic bacterium)).